The chain runs to 896 residues: MTEESEETVLYIEHRYVCSECNQLYGSLEEVLMHQNSHVPQQHFELVGVADPGVTVATDTASGTGLYQTLVQESQYQCLECGQLLMSPSQLLEHQELHLKMMAPQEAVPAEPSPKAPPLSSSTIHYECVDCKALFASQELWLNHRQTHLRATPTKAPAPVVLGSPVVLGPPVGQARVAVEHSYRKAEEGGEGATVPSAAATTTEVVTEVELLLYKCSECSQLFQLPADFLEHQATHFPAPVPESQEPALQQEVQASSPAEVPVSQPDPLPASDHSYELRNGEAIGRDRRGRRARRNNSGEAGGAATQELFCSACDQLFLSPHQLQQHLRSHREGVFKCPLCSRVFPSPSSLDQHLGDHSSESHFLCVDCGLAFGTEALLLAHRRAHTPNPLHSCPCGKTFVNLTKFLYHRRTHGVGGVPLPTTPVPPEEPVIGFPEPAPAETGEPEAPEPPVSEETSAGPAAPGTYRCLLCSREFGKALQLTRHQRFVHRLERRHKCSICGKMFKKKSHVRNHLRTHTGERPFPCPDCSKPFNSPANLARHRLTHTGERPYRCGDCGKAFTQSSTLRQHRLVHAQHFPYRCQECGVRFHRPYRLLMHRYHHTGEYPYKCRECPRSFLLRRLLEVHQLVVHAGRQPHRCPSCGAAFPSSLRLREHRCAAAAAQAPRRFECGTCGKKVGSAARLQAHEAAHAAAGPGEVLAKEPPAPRAPRATRAPVASPAALGSTATASPAAPARRRGLECSECKKLFSTETSLQVHRRIHTGERPYPCPDCGKAFRQSTHLKDHRRLHTGERPFACEVCGKAFAISMRLAEHRRIHTGERPYSCPDCGKSYRSFSNLWKHRKTHQQQHQAAVRQQLAEAEAAVGLAVMETAVEALPLVEAIEIYPLAEAEGVQISG.

C2H2-type zinc fingers lie at residues 16–38 (YVCS…QNSH) and 76–98 (YQCL…QELH). Phosphoserine is present on Ser113. Residues 126 to 148 (YECVDCKALFASQELWLNHRQTH) form a C2H2-type 3 zinc finger. Ser164 is subject to Phosphoserine. The segment at 214-236 (YKCSECSQLFQLPADFLEHQATH) adopts a C2H2-type 4 zinc-finger fold. The segment at 239 to 301 (APVPESQEPA…RARRNNSGEA (63 aa)) is disordered. The segment covering 247–257 (PALQQEVQASS) has biased composition (polar residues). Residues 274 to 287 (HSYELRNGEAIGRD) show a composition bias toward basic and acidic residues. At Ser298 the chain carries Phosphoserine. 4 C2H2-type zinc fingers span residues 309-331 (LFCS…LRSH), 336-358 (FKCP…LGDH), 364-386 (FLCV…RRAH), and 392-413 (HSCP…RRTH). Residues 434 to 460 (FPEPAPAETGEPEAPEPPVSEETSAGP) form a disordered region. The C2H2-type 9 zinc-finger motif lies at 466–489 (YRCLLCSREFGKALQLTRHQRFVH). Residues 495 to 517 (HKCSICGKMFKKKSHVRNHLRTH) form a C2H2-type 10; degenerate zinc finger. 4 consecutive C2H2-type zinc fingers follow at residues 523–545 (FPCP…RLTH), 551–573 (YRCG…RLVH), 579–601 (YRCQ…RYHH), and 607–630 (YKCR…LVVH). The C2H2-type 15; degenerate zinc finger occupies 636–659 (HRCPSCGAAFPSSLRLREHRCAAA). The C2H2-type 16 zinc finger occupies 667–689 (FECGTCGKKVGSAARLQAHEAAH). Residues 687-733 (AAHAAAGPGEVLAKEPPAPRAPRATRAPVASPAALGSTATASPAAPA) are disordered. A compositionally biased stretch (low complexity) spans 707 to 732 (APRATRAPVASPAALGSTATASPAAP). Ser717 is modified (phosphoserine). A Phosphothreonine modification is found at Thr724. Ser728 is modified (phosphoserine). C2H2-type zinc fingers lie at residues 738 to 760 (LECS…RRIH), 766 to 788 (YPCP…RRLH), 794 to 816 (FACE…RRIH), and 822 to 844 (YSCP…RKTH). The residue at position 832 (Arg832) is an Asymmetric dimethylarginine.

It belongs to the krueppel C2H2-type zinc-finger protein family.

It localises to the nucleus. In terms of biological role, may be involved in transcriptional regulation. This chain is Zinc finger protein 574 (ZNF574), found in Homo sapiens (Human).